We begin with the raw amino-acid sequence, 308 residues long: Acetaldehyde dehydrogenase (308 aa).

Residue 10–13 (SGNI) coordinates NAD(+). C128 acts as the Acyl-thioester intermediate in catalysis. NAD(+) is bound by residues 159-167 (SAGPGTRAN) and N285.

Belongs to the acetaldehyde dehydrogenase family.

The enzyme catalyses acetaldehyde + NAD(+) + CoA = acetyl-CoA + NADH + H(+). This is Acetaldehyde dehydrogenase from Salinispora tropica (strain ATCC BAA-916 / DSM 44818 / JCM 13857 / NBRC 105044 / CNB-440).